The following is a 179-amino-acid chain: Guanosine-3',5'-bis(diphosphate) 3'-pyrophosphohydrolase MESH1 (179 aa).

Residue glycine 2 is modified to N-acetylglycine. Position 25 is an N6-acetyllysine (lysine 25). The HD domain maps to tyrosine 32–leucine 127. Mn(2+) is bound by residues histidine 35, histidine 61, and aspartate 62. Catalysis depends on nucleophile residues glutamate 65 and aspartate 66. Residue lysine 97 is modified to N6-acetyllysine. Mn(2+) is bound at residue aspartate 122. An N6-acetyllysine modification is found at lysine 123.

This sequence belongs to the MESH1 family. Mn(2+) is required as a cofactor.

It catalyses the reaction guanosine 3',5'-bis(diphosphate) + H2O = GDP + diphosphate + H(+). In terms of biological role, ppGpp hydrolyzing enzyme involved in starvation response. This is Guanosine-3',5'-bis(diphosphate) 3'-pyrophosphohydrolase MESH1 (HDDC3) from Homo sapiens (Human).